The primary structure comprises 429 residues: Serine hydroxymethyltransferase (429 aa).

Residues Leu126 and 130-132 each bind (6S)-5,6,7,8-tetrahydrofolate; that span reads GHL. The residue at position 235 (Lys235) is an N6-(pyridoxal phosphate)lysine. (6S)-5,6,7,8-tetrahydrofolate is bound at residue 359–361; that stretch reads SPF.

Belongs to the SHMT family. In terms of assembly, homodimer. Pyridoxal 5'-phosphate serves as cofactor.

It is found in the cytoplasm. The enzyme catalyses (6R)-5,10-methylene-5,6,7,8-tetrahydrofolate + glycine + H2O = (6S)-5,6,7,8-tetrahydrofolate + L-serine. It participates in one-carbon metabolism; tetrahydrofolate interconversion. The protein operates within amino-acid biosynthesis; glycine biosynthesis; glycine from L-serine: step 1/1. Catalyzes the reversible interconversion of serine and glycine with tetrahydrofolate (THF) serving as the one-carbon carrier. This reaction serves as the major source of one-carbon groups required for the biosynthesis of purines, thymidylate, methionine, and other important biomolecules. Also exhibits THF-independent aldolase activity toward beta-hydroxyamino acids, producing glycine and aldehydes, via a retro-aldol mechanism. In Synechococcus sp. (strain WH7803), this protein is Serine hydroxymethyltransferase.